Consider the following 356-residue polypeptide: uncharacterized protein (356 aa).

3 helical membrane passes run 258 to 275, 290 to 312, and 325 to 347; these read SALQAAAAVIEFVAVFYY, PHWLSFSLLAAFTFTVVVYTEAL, and LVLLTLTLAILVILMATLPTLFS.

The protein localises to the cell membrane. This is an uncharacterized protein from Archaeoglobus fulgidus (strain ATCC 49558 / DSM 4304 / JCM 9628 / NBRC 100126 / VC-16).